A 244-amino-acid polypeptide reads, in one-letter code: tRNA pseudouridine synthase A (244 aa).

Catalysis depends on aspartate 52, which acts as the Nucleophile. Residue tyrosine 110 participates in substrate binding.

It belongs to the tRNA pseudouridine synthase TruA family. Homodimer.

The enzyme catalyses uridine(38/39/40) in tRNA = pseudouridine(38/39/40) in tRNA. Its function is as follows. Formation of pseudouridine at positions 38, 39 and 40 in the anticodon stem and loop of transfer RNAs. The sequence is that of tRNA pseudouridine synthase A from Caldicellulosiruptor bescii (strain ATCC BAA-1888 / DSM 6725 / KCTC 15123 / Z-1320) (Anaerocellum thermophilum).